The chain runs to 485 residues: Cytolytic protein enterolobin (485 aa).

2 cysteine pairs are disulfide-bonded: C34-C98 and C183-C189.

The protein belongs to the aerolysin family. In terms of assembly, oligomerizes as a hexamer. In terms of processing, the N-terminus is blocked.

In terms of biological role, cytolytic protein with insecticidal activity. Acts as a pro-inflammatory agent. This Enterolobium contortisiliquum (Pacara earpod tree) protein is Cytolytic protein enterolobin.